Here is a 268-residue protein sequence, read N- to C-terminus: tRNA pseudouridine synthase A (268 aa).

The active-site Nucleophile is Asp-52. Tyr-113 is a binding site for substrate.

Belongs to the tRNA pseudouridine synthase TruA family. In terms of assembly, homodimer.

The catalysed reaction is uridine(38/39/40) in tRNA = pseudouridine(38/39/40) in tRNA. Its function is as follows. Formation of pseudouridine at positions 38, 39 and 40 in the anticodon stem and loop of transfer RNAs. The chain is tRNA pseudouridine synthase A from Rhizobium leguminosarum bv. trifolii (strain WSM2304).